The following is a 524-amino-acid chain: Cysteine--tRNA ligase (524 aa).

Cys-29 is a binding site for Zn(2+). The short motif at 31 to 41 is the 'HIGH' region element; the sequence is PTVQAAPHVGH. Cys-207, His-232, and Glu-236 together coordinate Zn(2+). Residues 246–258 show a composition bias toward low complexity; sequence ARPASNAASADSP. The interval 246-273 is disordered; it reads ARPASNAASADSPGPGGGEPGGGEPSSG. Residues 259–270 are compositionally biased toward gly residues; that stretch reads GPGGGEPGGGEP. A 'KMSKS' region motif is present at residues 291–295; it reads KMSKS. ATP is bound at residue Lys-294.

This sequence belongs to the class-I aminoacyl-tRNA synthetase family. Monomer. The cofactor is Zn(2+).

It is found in the cytoplasm. The catalysed reaction is tRNA(Cys) + L-cysteine + ATP = L-cysteinyl-tRNA(Cys) + AMP + diphosphate. The sequence is that of Cysteine--tRNA ligase from Frankia casuarinae (strain DSM 45818 / CECT 9043 / HFP020203 / CcI3).